The sequence spans 524 residues: Probable pectinesterase/pectinesterase inhibitor 42 (524 aa).

The N-terminal stretch at 1-22 (MLVKVFSFFILMITMVVIGVSK) is a signal peptide. Residues 23–172 (EYCDDKHSCQ…ISKAKVALAL (150 aa)) are pectinesterase inhibitor 42. The interval 215-510 (DVVVAKDGTG…FTVAKLLDGE (296 aa)) is pectinesterase 42. N265 and N281 each carry an N-linked (GlcNAc...) asparagine glycan. T290 is a substrate binding site. D343 acts as the Proton donor; for pectinesterase activity in catalysis. Cysteines 357 and 377 form a disulfide. Catalysis depends on D364, which acts as the Nucleophile; for pectinesterase activity. An N-linked (GlcNAc...) asparagine glycan is attached at N412. Residues R430 and W432 each coordinate substrate.

This sequence in the N-terminal section; belongs to the PMEI family. It in the C-terminal section; belongs to the pectinesterase family. As to expression, expressed in siliques but not in flower buds.

The protein resides in the secreted. The protein localises to the cell wall. It catalyses the reaction [(1-&gt;4)-alpha-D-galacturonosyl methyl ester](n) + n H2O = [(1-&gt;4)-alpha-D-galacturonosyl](n) + n methanol + n H(+). The protein operates within glycan metabolism; pectin degradation; 2-dehydro-3-deoxy-D-gluconate from pectin: step 1/5. Acts in the modification of cell walls via demethylesterification of cell wall pectin. The polypeptide is Probable pectinesterase/pectinesterase inhibitor 42 (PME42) (Arabidopsis thaliana (Mouse-ear cress)).